The sequence spans 364 residues: Fructose-bisphosphate aldolase B (364 aa).

Ala2 carries the N-acetylalanine modification. N6-succinyllysine is present on Lys13. The residue at position 36 (Ser36) is a Phosphoserine. Phosphothreonine is present on Thr39. Arg43 contributes to the beta-D-fructose 1,6-bisphosphate binding site. Ser89 is modified (phosphoserine). The residue at position 119 (Thr119) is a Phosphothreonine. Lys121 is subject to N6-succinyllysine. Ser132 is modified (phosphoserine). The Proton acceptor role is filled by Glu188. At Ser206 the chain carries Phosphoserine. Catalysis depends on Lys230, which acts as the Schiff-base intermediate with dihydroxyacetone-P. A phosphoserine mark is found at Ser272, Ser276, Ser299, and Ser301. Residue 272–274 coordinates beta-D-fructose 1,6-bisphosphate; it reads SGG. Arg304 lines the beta-D-fructose 1,6-bisphosphate pocket. Ser309 carries the post-translational modification Phosphoserine. Lys317 is modified (N6-succinyllysine).

The protein belongs to the class I fructose-bisphosphate aldolase family. Homotetramer. Interacts with BBS1, BBS2, BBS4 and BBS7. Forms a ternary complex with G6PD and TP53; this interaction is direct.

Its subcellular location is the cytoplasm. It is found in the cytosol. The protein localises to the cytoskeleton. It localises to the microtubule organizing center. The protein resides in the centrosome. Its subcellular location is the centriolar satellite. The enzyme catalyses beta-D-fructose 1,6-bisphosphate = D-glyceraldehyde 3-phosphate + dihydroxyacetone phosphate. The catalysed reaction is beta-D-fructose 1-phosphate = D-glyceraldehyde + dihydroxyacetone phosphate. The protein operates within carbohydrate degradation; glycolysis; D-glyceraldehyde 3-phosphate and glycerone phosphate from D-glucose: step 4/4. It participates in carbohydrate biosynthesis; gluconeogenesis. Its pathway is carbohydrate metabolism; fructose metabolism. Catalyzes the aldol cleavage of fructose 1,6-biphosphate to form two triosephosphates dihydroxyacetone phosphate and D-glyceraldehyde 3-phosphate in glycolysis as well as the reverse stereospecific aldol addition reaction in gluconeogenesis. In fructolysis, metabolizes fructose 1-phosphate derived from the phosphorylation of dietary fructose by fructokinase into dihydroxyacetone phosphate and D-glyceraldehyde. Acts as an adapter independently of its enzymatic activity, exerts a tumor suppressor role by stabilizing the ternary complex with G6PD and TP53 to inhibit G6PD activity and keep oxidative pentose phosphate metabolism in check. In Mus musculus (Mouse), this protein is Fructose-bisphosphate aldolase B.